The following is a 304-amino-acid chain: Protease HtpX homolog (304 aa).

A run of 2 helical transmembrane segments spans residues isoleucine 14–isoleucine 34 and tyrosine 39–methionine 59. Position 144 (histidine 144) interacts with Zn(2+). Glutamate 145 is an active-site residue. Histidine 148 contributes to the Zn(2+) binding site. 2 helical membrane passes run isoleucine 159–phenylalanine 179 and alanine 202–isoleucine 222. Position 231 (glutamate 231) interacts with Zn(2+).

The protein belongs to the peptidase M48B family. The cofactor is Zn(2+).

The protein localises to the cell membrane. The sequence is that of Protease HtpX homolog from Listeria monocytogenes serovar 1/2a (strain ATCC BAA-679 / EGD-e).